The following is a 185-amino-acid chain: Ribosome-recycling factor (185 aa).

Belongs to the RRF family.

Its subcellular location is the cytoplasm. Functionally, responsible for the release of ribosomes from messenger RNA at the termination of protein biosynthesis. May increase the efficiency of translation by recycling ribosomes from one round of translation to another. In Thermotoga petrophila (strain ATCC BAA-488 / DSM 13995 / JCM 10881 / RKU-1), this protein is Ribosome-recycling factor.